The primary structure comprises 364 residues: Chorismate synthase (364 aa).

Residues Arg48 and Arg54 each contribute to the NADP(+) site. Residues 125–127 (RSS), Gly282, 297–301 (KPPAS), and Arg323 each bind FMN.

Belongs to the chorismate synthase family. Homotetramer. FMNH2 serves as cofactor.

The catalysed reaction is 5-O-(1-carboxyvinyl)-3-phosphoshikimate = chorismate + phosphate. The protein operates within metabolic intermediate biosynthesis; chorismate biosynthesis; chorismate from D-erythrose 4-phosphate and phosphoenolpyruvate: step 7/7. Catalyzes the anti-1,4-elimination of the C-3 phosphate and the C-6 proR hydrogen from 5-enolpyruvylshikimate-3-phosphate (EPSP) to yield chorismate, which is the branch point compound that serves as the starting substrate for the three terminal pathways of aromatic amino acid biosynthesis. This reaction introduces a second double bond into the aromatic ring system. In Chloroflexus aurantiacus (strain ATCC 29366 / DSM 635 / J-10-fl), this protein is Chorismate synthase.